A 308-amino-acid polypeptide reads, in one-letter code: Ribonuclease HIII (308 aa).

Residues 88 to 304 (FHCIGSDEAG…RDKAIHLMNQ (217 aa)) enclose the RNase H type-2 domain. Positions 94, 95, and 199 each coordinate a divalent metal cation.

This sequence belongs to the RNase HII family. RnhC subfamily. Mn(2+) serves as cofactor. Mg(2+) is required as a cofactor.

It is found in the cytoplasm. The enzyme catalyses Endonucleolytic cleavage to 5'-phosphomonoester.. Endonuclease that specifically degrades the RNA of RNA-DNA hybrids. This is Ribonuclease HIII from Staphylococcus epidermidis (strain ATCC 12228 / FDA PCI 1200).